A 388-amino-acid chain; its full sequence is Chorismate synthase (388 aa).

Residues Arg39 and Arg45 each contribute to the NADP(+) site. FMN is bound by residues Arg132–Ser134, Asn251–Ala252, Gly296, Lys311–Thr315, and Arg337.

Belongs to the chorismate synthase family. Homotetramer. The cofactor is FMNH2.

The catalysed reaction is 5-O-(1-carboxyvinyl)-3-phosphoshikimate = chorismate + phosphate. It participates in metabolic intermediate biosynthesis; chorismate biosynthesis; chorismate from D-erythrose 4-phosphate and phosphoenolpyruvate: step 7/7. Catalyzes the anti-1,4-elimination of the C-3 phosphate and the C-6 proR hydrogen from 5-enolpyruvylshikimate-3-phosphate (EPSP) to yield chorismate, which is the branch point compound that serves as the starting substrate for the three terminal pathways of aromatic amino acid biosynthesis. This reaction introduces a second double bond into the aromatic ring system. The chain is Chorismate synthase from Staphylococcus aureus (strain Mu50 / ATCC 700699).